A 326-amino-acid polypeptide reads, in one-letter code: Ras association domain-containing protein 2 (326 aa).

The Ras-associating domain maps to 176-264 (YNHKTSVFTP…SKVFLMEKDQ (89 aa)). An SARAH domain is found at 272–319 (VAQYIKFEMPVLKSFIQKLQEEEDREVEKLMRKYTVLRLMIRQRLEEI).

In terms of assembly, interacts directly with activated KRAS in a GTP-dependent manner. Interacts (via SARAH domain) with STK3/MST2 and STK4/MST1. Phosphorylated by STK3/MST2 and STK4/MST1.

It is found in the nucleus. The protein localises to the cytoplasm. Its subcellular location is the chromosome. The protein resides in the centromere. It localises to the kinetochore. Its function is as follows. Potential tumor suppressor. Acts as a KRAS-specific effector protein. May promote apoptosis and cell cycle arrest. Stabilizes STK3/MST2 by protecting it from proteasomal degradation. The polypeptide is Ras association domain-containing protein 2 (Rassf2) (Mus musculus (Mouse)).